The chain runs to 118 residues: Holo-[acyl-carrier-protein] synthase (118 aa).

Residues aspartate 8 and glutamate 57 each coordinate Mg(2+).

It belongs to the P-Pant transferase superfamily. AcpS family. It depends on Mg(2+) as a cofactor.

Its subcellular location is the cytoplasm. It catalyses the reaction apo-[ACP] + CoA = holo-[ACP] + adenosine 3',5'-bisphosphate + H(+). Functionally, transfers the 4'-phosphopantetheine moiety from coenzyme A to a Ser of acyl-carrier-protein. This Acholeplasma laidlawii (strain PG-8A) protein is Holo-[acyl-carrier-protein] synthase.